Here is a 182-residue protein sequence, read N- to C-terminus: Adenylate kinase (182 aa).

12-17 is an ATP binding site; it reads GAGKGT. Residues 32–61 are NMP; sequence STGELLRKEIDLDTYLGKQVKDIMNKGELV. Residues T33, R38, 59–61, 85–88, and Q92 each bind AMP; these read ELV and GYPR. The LID stretch occupies residues 126–132; the sequence is LRGRKDD. R127 is an ATP binding site. 2 residues coordinate AMP: R129 and R140. G168 provides a ligand contact to ATP.

This sequence belongs to the adenylate kinase family. Monomer.

Its subcellular location is the cytoplasm. It catalyses the reaction AMP + ATP = 2 ADP. It functions in the pathway purine metabolism; AMP biosynthesis via salvage pathway; AMP from ADP: step 1/1. Functionally, catalyzes the reversible transfer of the terminal phosphate group between ATP and AMP. Plays an important role in cellular energy homeostasis and in adenine nucleotide metabolism. The chain is Adenylate kinase from Prochlorococcus marinus (strain MIT 9515).